The sequence spans 417 residues: Gamma-glutamyl phosphate reductase (417 aa).

This sequence belongs to the gamma-glutamyl phosphate reductase family.

The protein localises to the cytoplasm. It catalyses the reaction L-glutamate 5-semialdehyde + phosphate + NADP(+) = L-glutamyl 5-phosphate + NADPH + H(+). It functions in the pathway amino-acid biosynthesis; L-proline biosynthesis; L-glutamate 5-semialdehyde from L-glutamate: step 2/2. Its function is as follows. Catalyzes the NADPH-dependent reduction of L-glutamate 5-phosphate into L-glutamate 5-semialdehyde and phosphate. The product spontaneously undergoes cyclization to form 1-pyrroline-5-carboxylate. The chain is Gamma-glutamyl phosphate reductase from Chlorobium phaeobacteroides (strain BS1).